Consider the following 516-residue polypeptide: Protein BTN1 (516 aa).

8 helical membrane passes run 24–44 (LFAA…IILS), 57–77 (GVVA…WPLL), 88–108 (VGFC…SSSL), 112–132 (LLGI…FLQL), 146–166 (LGAW…IWWL), 169–189 (GLGV…FPIT), 371–391 (PAII…TFFF), and 409–429 (SITI…SGYV).

It belongs to the battenin family.

It is found in the vacuole membrane. Involved in vacuolar transport and vacuole pH homeostasis. Also required for cytokinesis. The protein is Protein BTN1 (BTN1) of Cryptococcus neoformans var. neoformans serotype D (strain JEC21 / ATCC MYA-565) (Filobasidiella neoformans).